The chain runs to 126 residues: Glycine cleavage system H protein (126 aa).

Positions 22 to 103 (KAYIGITDYA…PYGSWMALVE (82 aa)) constitute a Lipoyl-binding domain. Lys63 carries the post-translational modification N6-lipoyllysine.

This sequence belongs to the GcvH family. As to quaternary structure, the glycine cleavage system is composed of four proteins: P, T, L and H. The cofactor is (R)-lipoate.

In terms of biological role, the glycine cleavage system catalyzes the degradation of glycine. The H protein shuttles the methylamine group of glycine from the P protein to the T protein. In Thermoanaerobacter sp. (strain X514), this protein is Glycine cleavage system H protein.